A 720-amino-acid polypeptide reads, in one-letter code: Exocyst complex component 7 (720 aa).

Coiled-coil stretches lie at residues 5–34 (EDASARKREIEEKLKQEQETLSFIRESLEK) and 63–83 (VHKQTENLQRLQENVDKTLSN). Serine 133 bears the Phosphoserine mark. The segment at 249–268 (SPAVQTKRKETPTKKAPKRP) is disordered.

The protein belongs to the EXO70 family.

It is found in the cytoplasm. It localises to the cytosol. Its subcellular location is the cell membrane. The protein resides in the midbody. The protein localises to the midbody ring. In terms of biological role, component of the exocyst complex involved in the docking of exocytic vesicles with fusion sites on the plasma membrane. It is required for neuron survival and plays an essential role in telencephalon development. This chain is Exocyst complex component 7 (exoc7), found in Danio rerio (Zebrafish).